Consider the following 250-residue polypeptide: Protein lin-28 homolog B (250 aa).

Disordered stretches follow at residues 1–27 and 98–126; these read MAEAGASKGGEEPGRLPEHEEEEESPL and RVTGPGGSPCLGSERRPKGKTVQKRKPKG. The segment covering 9–18 has biased composition (basic and acidic residues); that stretch reads GGEEPGRLPE. The region spanning 29 to 102 is the CSD domain; sequence HGAGHCKWFN…GLESIRVTGP (74 aa). Over residues 114 to 125 the composition is skewed to basic residues; the sequence is PKGKTVQKRKPK. CCHC-type zinc fingers lie at residues 127–144 and 149–166; these read DRCYNCGGLDHHAKECSL and KKCHYCQSIMHMVANCPH. The Zn(2+) site is built by Cys-129, Cys-132, His-137, Cys-142, Cys-151, Cys-154, His-159, and Cys-164. The tract at residues 165-250 is disordered; it reads PHKTVSQQPT…GPSVQKRKKT (86 aa). A compositionally biased stretch (polar residues) spans 168–177; the sequence is TVSQQPTSSQ. Residues 200–209 show a composition bias toward low complexity; the sequence is GYSSPSYSQE. Basic and acidic residues predominate over residues 210–219; that stretch reads GRSEISERSG.

The protein belongs to the lin-28 family.

The protein localises to the nucleus. It localises to the nucleolus. Its function is as follows. Suppressor of specific microRNA (miRNA) biogenesis. Binds target primary miRNA transcripts and sequester them in the nucleolus, away from the microprocessor complex, hence preventing their processing into mature miRNA. The specific interaction with target pri-miRNAs occurs via an 5'-GGAG-3' motif in the pre-miRNA terminal loop. This Gallus gallus (Chicken) protein is Protein lin-28 homolog B (LIN28B).